A 108-amino-acid chain; its full sequence is Replication restart protein PriB (108 aa).

Positions 8-108 (VDNRFSLIGK…LHAEQIEFIE (101 aa)) constitute an SSB domain.

Belongs to the PriB family. Homodimer. Interacts with PriA and DnaT. Component of the replication restart primosome. Primosome assembly occurs via a 'hand-off' mechanism. PriA binds to replication forks, subsequently PriB then DnaT bind; DnaT then displaces ssDNA to generate the helicase loading substrate.

Functionally, involved in the restart of stalled replication forks, which reloads the replicative helicase on sites other than the origin of replication; the PriA-PriB pathway is the major replication restart pathway. During primosome assembly it facilitates complex formation between PriA and DnaT on DNA; stabilizes PriA on DNA. Stimulates the DNA unwinding activity of PriA helicase. In Histophilus somni (strain 2336) (Haemophilus somnus), this protein is Replication restart protein PriB.